The chain runs to 204 residues: Phosphoribosyl-dephospho-CoA transferase (204 aa).

Residues Asp-129 and Asp-131 contribute to the active site.

It belongs to the MdcG family.

The enzyme catalyses apo-[malonate decarboxylase ACP] + 2'-(5''-triphospho-alpha-D-ribosyl)-3'-dephospho-CoA = holo-[malonate decarboxylase ACP] + diphosphate. Functionally, transfers 2'-(5-triphosphoribosyl)-3'-dephosphocoenzyme-A to the apo-[acyl-carrier-protein] of the malonate decarboxylase to yield holo-[acyl-carrier-protein]. In Pseudomonas putida (strain W619), this protein is Phosphoribosyl-dephospho-CoA transferase.